The chain runs to 172 residues: Translation initiation factor IF-3 (172 aa).

It belongs to the IF-3 family. Monomer.

It localises to the cytoplasm. Functionally, IF-3 binds to the 30S ribosomal subunit and shifts the equilibrium between 70S ribosomes and their 50S and 30S subunits in favor of the free subunits, thus enhancing the availability of 30S subunits on which protein synthesis initiation begins. The polypeptide is Translation initiation factor IF-3 (Campylobacter jejuni subsp. doylei (strain ATCC BAA-1458 / RM4099 / 269.97)).